The primary structure comprises 257 residues: Protein Cmaq_1209 (257 aa).

Belongs to the CinA family.

The chain is Protein Cmaq_1209 from Caldivirga maquilingensis (strain ATCC 700844 / DSM 13496 / JCM 10307 / IC-167).